A 1362-amino-acid polypeptide reads, in one-letter code: DNA-directed RNA polymerase subunit beta'' (1362 aa).

The Zn(2+) site is built by Cys-224, Cys-295, Cys-302, and Cys-305.

The protein belongs to the RNA polymerase beta' chain family. RpoC2 subfamily. As to quaternary structure, in plastids the minimal PEP RNA polymerase catalytic core is composed of four subunits: alpha, beta, beta', and beta''. When a (nuclear-encoded) sigma factor is associated with the core the holoenzyme is formed, which can initiate transcription. It depends on Zn(2+) as a cofactor.

The protein resides in the plastid. Its subcellular location is the chloroplast. It carries out the reaction RNA(n) + a ribonucleoside 5'-triphosphate = RNA(n+1) + diphosphate. In terms of biological role, DNA-dependent RNA polymerase catalyzes the transcription of DNA into RNA using the four ribonucleoside triphosphates as substrates. This Helianthus annuus (Common sunflower) protein is DNA-directed RNA polymerase subunit beta''.